Reading from the N-terminus, the 200-residue chain is Riboflavin synthase (200 aa).

2 Lumazine-binding repeats span residues M1–H97 and L98–V190. Residues G4 to I6, C48 to T50, D62 to T67, G101 to V103, K132, S141 to T143, and G155 to T160 contribute to the 2,4-dihydroxypteridine site.

As to quaternary structure, homotrimer.

The catalysed reaction is 2 6,7-dimethyl-8-(1-D-ribityl)lumazine + H(+) = 5-amino-6-(D-ribitylamino)uracil + riboflavin. The protein operates within cofactor biosynthesis; riboflavin biosynthesis; riboflavin from 2-hydroxy-3-oxobutyl phosphate and 5-amino-6-(D-ribitylamino)uracil: step 2/2. Catalyzes the dismutation of two molecules of 6,7-dimethyl-8-ribityllumazine, resulting in the formation of riboflavin and 5-amino-6-(D-ribitylamino)uracil. The protein is Riboflavin synthase (ribE) of Chlamydia pneumoniae (Chlamydophila pneumoniae).